A 625-amino-acid chain; its full sequence is Threonine--tRNA ligase (625 aa).

The segment at M1 to E147 is editing domain. Residues P206 to P505 are catalytic. 3 residues coordinate Zn(2+): C298, H350, and H474.

Belongs to the class-II aminoacyl-tRNA synthetase family. In terms of assembly, homodimer. The cofactor is Zn(2+).

It is found in the cytoplasm. It carries out the reaction tRNA(Thr) + L-threonine + ATP = L-threonyl-tRNA(Thr) + AMP + diphosphate + H(+). Catalyzes the attachment of threonine to tRNA(Thr) in a two-step reaction: L-threonine is first activated by ATP to form Thr-AMP and then transferred to the acceptor end of tRNA(Thr). Also edits incorrectly charged L-seryl-tRNA(Thr). This chain is Threonine--tRNA ligase, found in Pyrococcus furiosus (strain ATCC 43587 / DSM 3638 / JCM 8422 / Vc1).